A 900-amino-acid chain; its full sequence is Phosphoenolpyruvate carboxylase (900 aa).

Catalysis depends on residues H140 and K568.

The protein belongs to the PEPCase type 1 family. Mg(2+) serves as cofactor.

It catalyses the reaction oxaloacetate + phosphate = phosphoenolpyruvate + hydrogencarbonate. Forms oxaloacetate, a four-carbon dicarboxylic acid source for the tricarboxylic acid cycle. This chain is Phosphoenolpyruvate carboxylase, found in Neisseria meningitidis serogroup C / serotype 2a (strain ATCC 700532 / DSM 15464 / FAM18).